The chain runs to 159 residues: Fimbrial protein EcpB (159 aa).

A propeptide spans 1 to 6 (leader sequence); that stretch reads MYKQKG. The residue at position 7 (F7) is an N-methylphenylalanine. A helical transmembrane segment spans residues 7–29; the sequence is FTLIELMIVIAIIGILAAIALPL. Cysteines 137 and 156 form a disulfide.

Belongs to the N-Me-Phe pilin family.

The protein resides in the fimbrium. Its subcellular location is the membrane. This chain is Fimbrial protein EcpB (ecpB), found in Eikenella corrodens.